The primary structure comprises 27 residues: DELTA-pseudomyrmecitoxin-Pp1a subunit A (27 aa).

In terms of assembly, heterodimer composed of subunit A and subunit B (DELTA-PSDTX-Pp1a); disulfide-linked. In terms of tissue distribution, expressed by the venom gland.

It is found in the secreted. In terms of biological role, this heterodimer has insecticidal and cytotoxic properties. Induces immediate paralysis when injected into blowflies (Lucilia cuprina), and then death within 24 hours. Also inhibits the growth of Aedes albopictus mosquito C6/36 cells. This Pseudomyrmex penetrator (Ant) protein is DELTA-pseudomyrmecitoxin-Pp1a subunit A.